The chain runs to 698 residues: Superoxide-generating NADPH oxidase heavy chain subunit B (698 aa).

Disordered regions lie at residues 1–68 and 134–158; these read MNEK…NITP and NDQV…NNKN. The Cytoplasmic portion of the chain corresponds to 1–184; that stretch reads MNEKKELQQE…KIRGWWWHRG (184 aa). Polar residues-rich tracts occupy residues 16-25 and 33-53; these read FQTPKNQQLE and EISS…PISQ. Composition is skewed to low complexity over residues 54–65 and 138–156; these read NDNSNNENESLN and NSNT…TNNN. Residues 185 to 205 form a helical membrane-spanning segment; sequence ISTYIMLFYIALNIGVGVHMF. Residues 206–229 lie on the Extracellular side of the membrane; sequence YNMYHSDIFKFLGLSFCFSRTAAR. One can recognise a Ferric oxidoreductase domain in the interval 225 to 375; sequence RTAARLINLN…LFIPFYILLC (151 aa). The helical transmembrane segment at 230 to 250 threads the bilayer; that stretch reads LINLNSAVILLPVLRNFLSWL. Over 251–269 the chain is Cytoplasmic; that stretch reads RGTIVNNYIPIDKHLNFHK. Heme-binding residues include H268 and H282. Residues 270–290 traverse the membrane as a helical segment; that stretch reads LCAFMLFCCTIIHCVGHYISF. Topologically, residues 291–324 are extracellular; that stretch reads KKINDDVLKIDDGKSVAGDYLNININNFPDEKYL. A helical transmembrane segment spans residues 325-345; it reads FFKSVPGITGHIMLLILILIV. At 346–355 the chain is on the cytoplasmic side; sequence SSSMWRIRRP. The chain crosses the membrane as a helical span at residues 356–376; the sequence is MFEIFWYVHHLFIPFYILLCF. Heme contacts are provided by H364 and H377. At 377–388 the chain is on the extracellular side; that stretch reads HGYSKILKKDPQ. Residues 389 to 409 form a helical membrane-spanning segment; sequence SWMWIIAPFILYSIERLIRIA. The FAD-binding FR-type domain maps to 404-528; it reads RLIRIARSKK…DGPFGAPAEN (125 aa). The Cytoplasmic portion of the chain corresponds to 410–698; sequence RSKKRVILEK…CHLIFHKENF (289 aa). 460–466 is a binding site for FAD; the sequence is HPFTITS.

In terms of assembly, composed of a heavy chain and a light chain. FAD serves as cofactor.

It localises to the membrane. In terms of biological role, critical component of the membrane-bound oxidase that generates superoxide. It is the terminal component of a respiratory chain that transfers single electrons from cytoplasmic NADPH across the plasma membrane to molecular oxygen on the exterior. In Dictyostelium discoideum (Social amoeba), this protein is Superoxide-generating NADPH oxidase heavy chain subunit B (noxB).